A 169-amino-acid polypeptide reads, in one-letter code: Regulator of sigma D (169 aa).

It belongs to the Rsd/AlgQ family. In terms of assembly, interacts with RpoD.

The protein localises to the cytoplasm. Binds RpoD and negatively regulates RpoD-mediated transcription activation by preventing the interaction between the primary sigma factor RpoD with the catalytic core of the RNA polymerase and with promoter DNA. May be involved in replacement of the RNA polymerase sigma subunit from RpoD to RpoS during the transition from exponential growth to the stationary phase. This is Regulator of sigma D from Yersinia pseudotuberculosis serotype O:1b (strain IP 31758).